The chain runs to 20 residues: Brevinin-1SPb (20 aa).

Cys-14 and Cys-20 are joined by a disulfide.

Expressed by the skin glands.

It localises to the secreted. Antimicrobial peptide with activity against Gram-negative and Gram-positive bacteria (MIC=50 uM against E.coli, MIC=6 uM against S.aureus) and fungi (MIC=13 uM against C.albicans). Shows hemolytic activity on human erythrocytes (HC(50)=25 uM). The chain is Brevinin-1SPb from Lithobates septentrionalis (Mink frog).